The sequence spans 240 residues: DNA repair protein RecO (240 aa).

Belongs to the RecO family.

Functionally, involved in DNA repair and RecF pathway recombination. The sequence is that of DNA repair protein RecO from Xanthomonas oryzae pv. oryzae (strain MAFF 311018).